A 594-amino-acid polypeptide reads, in one-letter code: Cytosolic Fe-S cluster assembly factor NAR1 (594 aa).

Residues C20, C88, C91, C94, C209, and C264 each coordinate [4Fe-4S] cluster. Residues 444 to 465 are disordered; sequence RRARMSKSEDSSGASASSMAPA. A compositionally biased stretch (low complexity) spans 454–465; sequence SSGASASSMAPA. [4Fe-4S] cluster is bound by residues C481 and C485. The disordered stretch occupies residues 492–511; that stretch reads IAAPAPTSTPPAAPAPAHAA.

Belongs to the NARF family.

In terms of biological role, component of the cytosolic Fe/S protein assembly machinery. Required for maturation of extramitochondrial Fe/S proteins. May play a role in the transfer of pre-assembled Fe/S clusters to target apoproteins. This chain is Cytosolic Fe-S cluster assembly factor NAR1 (NAR1), found in Lodderomyces elongisporus (strain ATCC 11503 / CBS 2605 / JCM 1781 / NBRC 1676 / NRRL YB-4239) (Yeast).